Reading from the N-terminus, the 209-residue chain is Large ribosomal subunit protein uL3 (209 aa).

It belongs to the universal ribosomal protein uL3 family. In terms of assembly, part of the 50S ribosomal subunit. Forms a cluster with proteins L14 and L19.

In terms of biological role, one of the primary rRNA binding proteins, it binds directly near the 3'-end of the 23S rRNA, where it nucleates assembly of the 50S subunit. This chain is Large ribosomal subunit protein uL3, found in Oceanobacillus iheyensis (strain DSM 14371 / CIP 107618 / JCM 11309 / KCTC 3954 / HTE831).